A 710-amino-acid polypeptide reads, in one-letter code: Pentatricopeptide repeat-containing protein At3g14330 (710 aa).

10 PPR repeats span residues 166–196 (NPKLLSKLITLFSVCRRLDLARKIFDDVTDS), 200–234 (TEKVWAAMAIGYSRNGSPRDALIVYVDMLCSFIEP), 235–269 (GNFSISVALKACVDLKDLRVGRGIHAQIVKRKEKV), 270–304 (DQVVYNVLLKLYMESGLFDDARKVFDGMSERNVVT), 305–331 (WNSLISVLSKKVRVHEMFNLFRKMQEE), 336–370 (SWATLTTILPACSRVAALLTGKEIHAQILKSKEKP), 371–401 (DVPLLNSLMDMYGKCGEVEYSRRVFDVMLTK), 402–436 (DLASWNIMLNCYAINGNIEEVINLFEWMIESGVAP), 437–467 (DGITFVALLSGCSDTGLTEYGLSLFERMKTE), and 473–503 (ALEHYACLVDILGRAGKIKEAVKVIETMPFK). The type E motif stretch occupies residues 508–583 (IWGSLLNSCR…EAGCSWVQVK (76 aa)). The type E(+) motif stretch occupies residues 584–615 (DKIQIFVAGGGYEFRNSDEYKKVWTELQEAIE). The segment at 616–710 (KSGYSPNTSV…DGICSCKDYW (95 aa)) is type DYW motif.

The protein belongs to the PPR family. PCMP-H subfamily.

This is Pentatricopeptide repeat-containing protein At3g14330 (PCMP-H57) from Arabidopsis thaliana (Mouse-ear cress).